Consider the following 125-residue polypeptide: RutC family protein aq_364 (125 aa).

Belongs to the RutC family.

This is RutC family protein aq_364 from Aquifex aeolicus (strain VF5).